A 290-amino-acid polypeptide reads, in one-letter code: 33 kDa chaperonin (290 aa).

2 disulfide bridges follow: Cys-235–Cys-237 and Cys-268–Cys-271.

It belongs to the HSP33 family. Under oxidizing conditions two disulfide bonds are formed involving the reactive cysteines. Under reducing conditions zinc is bound to the reactive cysteines and the protein is inactive.

The protein resides in the cytoplasm. Redox regulated molecular chaperone. Protects both thermally unfolding and oxidatively damaged proteins from irreversible aggregation. Plays an important role in the bacterial defense system toward oxidative stress. In Streptococcus pyogenes serotype M18 (strain MGAS8232), this protein is 33 kDa chaperonin.